The sequence spans 61 residues: Insect toxin BsIT1 (61 aa).

An LCN-type CS-alpha/beta domain is found at Asp-1–Cys-61. 4 disulfide bridges follow: Cys-10–Cys-61, Cys-14–Cys-35, Cys-21–Cys-42, and Cys-25–Cys-44.

This sequence belongs to the long (4 C-C) scorpion toxin superfamily. Sodium channel inhibitor family. Beta subfamily. In terms of tissue distribution, expressed by the venom gland.

The protein localises to the secreted. Its function is as follows. Depressant insect beta-toxins cause a transient contraction paralysis followed by a slow flaccid paralysis. They bind voltage-independently at site-4 of sodium channels (Nav) and shift the voltage of activation toward more negative potentials thereby affecting sodium channel activation and promoting spontaneous and repetitive firing. This toxin is active only on insects and causes a transient contraction paralysis followed by a slow flaccid paralysis. This chain is Insect toxin BsIT1, found in Hottentotta tamulus sindicus (Scorpion).